A 291-amino-acid chain; its full sequence is Homoserine kinase (291 aa).

80–90 (RPSSGLGSSAA) contacts ATP.

Belongs to the GHMP kinase family. Homoserine kinase subfamily.

The protein resides in the cytoplasm. It carries out the reaction L-homoserine + ATP = O-phospho-L-homoserine + ADP + H(+). The protein operates within amino-acid biosynthesis; L-threonine biosynthesis; L-threonine from L-aspartate: step 4/5. Functionally, catalyzes the ATP-dependent phosphorylation of L-homoserine to L-homoserine phosphate. The polypeptide is Homoserine kinase (Haloquadratum walsbyi (strain DSM 16790 / HBSQ001)).